The sequence spans 205 residues: Large ribosomal subunit protein bL21 (205 aa).

Residues 107-137 (APAKKAAAKKEEAPKADTAPKAAAAPTEEAA) are disordered. The segment covering 122–137 (ADTAPKAAAAPTEEAA) has biased composition (low complexity).

Belongs to the bacterial ribosomal protein bL21 family. In terms of assembly, part of the 50S ribosomal subunit. Contacts protein L20.

In terms of biological role, this protein binds to 23S rRNA in the presence of protein L20. The chain is Large ribosomal subunit protein bL21 from Hyphomonas neptunium (strain ATCC 15444).